The primary structure comprises 210 residues: 7-cyano-7-deazaguanine synthase 2 (210 aa).

10 to 20 (HSGGMDSTTCL) contributes to the ATP binding site. 4 residues coordinate Zn(2+): C180, C193, C196, and C199.

This sequence belongs to the QueC family. Zn(2+) serves as cofactor.

It catalyses the reaction 7-carboxy-7-deazaguanine + NH4(+) + ATP = 7-cyano-7-deazaguanine + ADP + phosphate + H2O + H(+). It functions in the pathway purine metabolism; 7-cyano-7-deazaguanine biosynthesis. Its function is as follows. Catalyzes the ATP-dependent conversion of 7-carboxy-7-deazaguanine (CDG) to 7-cyano-7-deazaguanine (preQ(0)). The chain is 7-cyano-7-deazaguanine synthase 2 from Rhodopseudomonas palustris (strain HaA2).